The chain runs to 62 residues: Small ribosomal subunit protein eS30z/eS30y/eS30x (62 aa).

The interval 1-38 (MGKVHGSLARAGKVRGQTPKVAKQDKKKKPRGRAHKRL) is disordered. Over residues 25–38 (DKKKKPRGRAHKRL) the composition is skewed to basic residues.

Belongs to the eukaryotic ribosomal protein eS30 family.

The sequence is that of Small ribosomal subunit protein eS30z/eS30y/eS30x (RPS30A) from Arabidopsis thaliana (Mouse-ear cress).